The primary structure comprises 587 residues: Putative adenylate cyclase 3 (587 aa).

In terms of domain architecture, Guanylate cyclase spans A12–E127. 5 TPR repeats span residues L343–M376, P421–S454, A455–F488, L490–S522, and M524–F556.

Belongs to the adenylyl cyclase class-3 family.

It carries out the reaction ATP = 3',5'-cyclic AMP + diphosphate. The polypeptide is Putative adenylate cyclase 3 (cya3) (Rhizobium meliloti (strain 1021) (Ensifer meliloti)).